We begin with the raw amino-acid sequence, 497 residues long: Catalase-2 (497 aa).

Residues H71 and N144 contribute to the active site. Y354 lines the heme pocket.

Belongs to the catalase family. Heme serves as cofactor.

It carries out the reaction 2 H2O2 = O2 + 2 H2O. In terms of biological role, catalase involved in the oxidative stress response serving to protect cells from toxicity. For instance plays a role in defending against oxidative damage induced by excessive copper stress. Not required for maintaining normal lifespan. The protein is Catalase-2 of Caenorhabditis elegans.